Consider the following 120-residue polypeptide: Large ribosomal subunit protein bL19 (120 aa).

Belongs to the bacterial ribosomal protein bL19 family.

Functionally, this protein is located at the 30S-50S ribosomal subunit interface and may play a role in the structure and function of the aminoacyl-tRNA binding site. The polypeptide is Large ribosomal subunit protein bL19 (Chlorobium phaeobacteroides (strain DSM 266 / SMG 266 / 2430)).